The chain runs to 516 residues: GMP synthase [glutamine-hydrolyzing] (516 aa).

The Glutamine amidotransferase type-1 domain occupies 8–198 (KILILDFGSQ…VVNICGCDTL (191 aa)). The active-site Nucleophile is the Cys-84. Active-site residues include His-172 and Glu-174. The GMPS ATP-PPase domain occupies 199–391 (WNIENIIEND…LGLPYNMLYR (193 aa)). Position 226-232 (226-232 (SGGVDSS)) interacts with ATP.

As to quaternary structure, homodimer.

The catalysed reaction is XMP + L-glutamine + ATP + H2O = GMP + L-glutamate + AMP + diphosphate + 2 H(+). Its pathway is purine metabolism; GMP biosynthesis; GMP from XMP (L-Gln route): step 1/1. In terms of biological role, catalyzes the synthesis of GMP from XMP. This chain is GMP synthase [glutamine-hydrolyzing], found in Francisella tularensis subsp. holarctica (strain LVS).